Consider the following 94-residue polypeptide: Small ribosomal subunit protein uS19 (94 aa).

Belongs to the universal ribosomal protein uS19 family.

In terms of biological role, protein S19 forms a complex with S13 that binds strongly to the 16S ribosomal RNA. The polypeptide is Small ribosomal subunit protein uS19 (Dictyoglomus turgidum (strain DSM 6724 / Z-1310)).